Reading from the N-terminus, the 272-residue chain is 2-dehydro-3-deoxyphosphooctonate aldolase (272 aa).

It belongs to the KdsA family.

Its subcellular location is the cytoplasm. It catalyses the reaction D-arabinose 5-phosphate + phosphoenolpyruvate + H2O = 3-deoxy-alpha-D-manno-2-octulosonate-8-phosphate + phosphate. The protein operates within carbohydrate biosynthesis; 3-deoxy-D-manno-octulosonate biosynthesis; 3-deoxy-D-manno-octulosonate from D-ribulose 5-phosphate: step 2/3. It participates in bacterial outer membrane biogenesis; lipopolysaccharide biosynthesis. The sequence is that of 2-dehydro-3-deoxyphosphooctonate aldolase from Pelobacter propionicus (strain DSM 2379 / NBRC 103807 / OttBd1).